The primary structure comprises 206 residues: NADH-quinone oxidoreductase subunit C (206 aa).

This sequence belongs to the complex I 30 kDa subunit family. NDH-1 is composed of 14 different subunits. Subunits NuoB, C, D, E, F, and G constitute the peripheral sector of the complex.

It is found in the cell inner membrane. The enzyme catalyses a quinone + NADH + 5 H(+)(in) = a quinol + NAD(+) + 4 H(+)(out). Its function is as follows. NDH-1 shuttles electrons from NADH, via FMN and iron-sulfur (Fe-S) centers, to quinones in the respiratory chain. The immediate electron acceptor for the enzyme in this species is believed to be ubiquinone. Couples the redox reaction to proton translocation (for every two electrons transferred, four hydrogen ions are translocated across the cytoplasmic membrane), and thus conserves the redox energy in a proton gradient. The sequence is that of NADH-quinone oxidoreductase subunit C from Bordetella avium (strain 197N).